We begin with the raw amino-acid sequence, 110 residues long: Co-chaperonin GroES (110 aa).

The protein belongs to the GroES chaperonin family. In terms of assembly, heptamer of 7 subunits arranged in a ring. Interacts with the chaperonin GroEL.

The protein resides in the cytoplasm. Its function is as follows. Together with the chaperonin GroEL, plays an essential role in assisting protein folding. The GroEL-GroES system forms a nano-cage that allows encapsulation of the non-native substrate proteins and provides a physical environment optimized to promote and accelerate protein folding. GroES binds to the apical surface of the GroEL ring, thereby capping the opening of the GroEL channel. The sequence is that of Co-chaperonin GroES from Mycoplasma genitalium (strain ATCC 33530 / DSM 19775 / NCTC 10195 / G37) (Mycoplasmoides genitalium).